The sequence spans 158 residues: Leptin-B (158 aa).

The signal sequence occupies residues 1 to 19 (MYMPLALVYASFLTLPAST). Cys-114 and Cys-158 are joined by a disulfide.

It belongs to the leptin family. Highly expressed in the brain and eye. Expressed at low levels in muscle and skin.

Its subcellular location is the secreted. Functionally, may function as part of a signaling pathway that acts to regulate the size of the body fat depot. The protein is Leptin-B of Oryzias latipes (Japanese rice fish).